A 173-amino-acid chain; its full sequence is Alpha-crystallin A chain (173 aa).

M1 carries the post-translational modification N-acetylmethionine. Residues 1–63 (MDVTIQHPWF…RTVLDSGVSE (63 aa)) form a required for complex formation with BFSP1 and BFSP2 region. Residue Q6 is modified to Deamidated glutamine; partial. S45 is subject to Phosphoserine. Q50 is subject to Deamidated glutamine; partial. Positions 52–162 (LFRTVLDSGV…GHSERAIPVS (111 aa)) constitute a sHSP domain. At K70 the chain carries N6-acetyllysine. Q90 bears the Deamidated glutamine; partial mark. Position 99 is an N6-acetyllysine (K99). H100 lines the Zn(2+) pocket. N101 is modified (deamidated asparagine; partial). E102 and H107 together coordinate Zn(2+). S122 bears the Phosphoserine mark. At N123 the chain carries Deamidated asparagine; partial. The disordered stretch occupies residues 145 to 173 (KVQSGLDAGHSERAIPVSREEKPSSAPSS). Position 147 is a deamidated glutamine; partial (Q147). A compositionally biased stretch (basic and acidic residues) spans 153 to 167 (GHSERAIPVSREEKP). H154 contacts Zn(2+). S162 carries O-linked (GlcNAc) serine glycosylation.

The protein belongs to the small heat shock protein (HSP20) family. In terms of assembly, heteromer composed of three CRYAA and one CRYAB subunits. Inter-subunit bridging via zinc ions enhances stability, which is crucial as there is no protein turn over in the lens. Can also form homodimers and homotetramers (dimers of dimers) which serve as the building blocks of homooligomers. Within homooligomers, the zinc-binding motif is created from residues of 3 different molecules. His-100 and Glu-102 from one molecule are ligands of the zinc ion, and His-107 and His-154 residues from additional molecules complete the site with tetrahedral coordination geometry. Part of a complex required for lens intermediate filament formation composed of BFSP1, BFSP2 and CRYAA. Acetylation at Lys-70 may increase chaperone activity. Post-translationally, undergoes age-dependent proteolytical cleavage at the C-terminus.

The protein localises to the cytoplasm. It is found in the nucleus. In terms of biological role, contributes to the transparency and refractive index of the lens. Acts as a chaperone, preventing aggregation of various proteins under a wide range of stress conditions. Required for the correct formation of lens intermediate filaments as part of a complex composed of BFSP1, BFSP2 and CRYAA. The chain is Alpha-crystallin A chain (CRYAA) from Eulemur fulvus fulvus (Brown lemur).